The chain runs to 108 residues: MMRGGMGNMQKMLKQMQKMQKEMQKAQEELAEKTVEGTAGGGMVTVVANGHKQILEVKIKEEVVDPDDIEMLQDLILAATNDALKKADELANEMMGQFTKGLNIPGLF.

The interval 1-32 is disordered; that stretch reads MMRGGMGNMQKMLKQMQKMQKEMQKAQEELAE. The segment covering 9–18 has biased composition (low complexity); sequence MQKMLKQMQK. Basic and acidic residues predominate over residues 19 to 32; that stretch reads MQKEMQKAQEELAE.

The protein belongs to the YbaB/EbfC family. Homodimer.

The protein resides in the cytoplasm. Its subcellular location is the nucleoid. In terms of biological role, binds to DNA and alters its conformation. May be involved in regulation of gene expression, nucleoid organization and DNA protection. The sequence is that of Nucleoid-associated protein GK0018 from Geobacillus kaustophilus (strain HTA426).